Here is a 326-residue protein sequence, read N- to C-terminus: ATP-dependent 6-phosphofructokinase 2 (326 aa).

Gly14 lines the ATP pocket. 24–28 contributes to the ADP binding site; it reads RAVTR. ATP contacts are provided by residues 75-76 and 105-108; these read RC and GDGS. Asp106 is a binding site for Mg(2+). 129–131 lines the substrate pocket; the sequence is TID. The Proton acceptor role is filled by Asp131. Arg158 is a binding site for ADP. Substrate contacts are provided by residues Arg166 and 173 to 175; that span reads MGR. Residues 189–191, Lys215, and 217–219 contribute to the ADP site; these read GAE and KNS. Substrate-binding positions include Glu226, Arg250, and 256–259; that span reads HLQR.

It belongs to the phosphofructokinase type A (PFKA) family. ATP-dependent PFK group I subfamily. Prokaryotic clade 'B1' sub-subfamily. Homotetramer. It depends on Mg(2+) as a cofactor.

Its subcellular location is the cytoplasm. It carries out the reaction beta-D-fructose 6-phosphate + ATP = beta-D-fructose 1,6-bisphosphate + ADP + H(+). The protein operates within carbohydrate degradation; glycolysis; D-glyceraldehyde 3-phosphate and glycerone phosphate from D-glucose: step 3/4. With respect to regulation, allosterically activated by ADP and other diphosphonucleosides, and allosterically inhibited by phosphoenolpyruvate. Its function is as follows. Catalyzes the phosphorylation of D-fructose 6-phosphate to fructose 1,6-bisphosphate by ATP, the first committing step of glycolysis. This chain is ATP-dependent 6-phosphofructokinase 2, found in Bacteroides thetaiotaomicron (strain ATCC 29148 / DSM 2079 / JCM 5827 / CCUG 10774 / NCTC 10582 / VPI-5482 / E50).